The primary structure comprises 216 residues: Somatotropin (216 aa).

Positions 1–26 (MAAGPRNSVLLAFALLCLPWPQEVGT) are cleaved as a signal peptide. Histidine 45 contacts Zn(2+). A disulfide bridge connects residues cysteine 78 and cysteine 189. Phosphoserine is present on serine 131. Glutamate 198 is a binding site for Zn(2+). Cysteine 206 and cysteine 214 form a disulfide bridge.

Belongs to the somatotropin/prolactin family.

It localises to the secreted. Plays an important role in growth control. Its major role in stimulating body growth is to stimulate the liver and other tissues to secrete IGF1. It stimulates both the differentiation and proliferation of myoblasts. It also stimulates amino acid uptake and protein synthesis in muscle and other tissues. The sequence is that of Somatotropin (GH1) from Felis catus (Cat).